A 105-amino-acid chain; its full sequence is TMEM14 protein homolog YJR085C (105 aa).

The next 3 membrane-spanning stretches (helical) occupy residues Ile26–Leu46, Gly53–Met73, and Phe77–Tyr97.

This sequence belongs to the TMEM14 family.

The protein resides in the mitochondrion. It localises to the membrane. This chain is TMEM14 protein homolog YJR085C, found in Saccharomyces cerevisiae (strain ATCC 204508 / S288c) (Baker's yeast).